Consider the following 415-residue polypeptide: tRNA(Met) cytidine acetate ligase (415 aa).

ATP is bound by residues 7–20, G102, N165, and 190–191; these read IVEY…HLYH and RI.

The protein belongs to the TmcAL family.

The protein localises to the cytoplasm. It catalyses the reaction cytidine(34) in elongator tRNA(Met) + acetate + ATP = N(4)-acetylcytidine(34) in elongator tRNA(Met) + AMP + diphosphate. Catalyzes the formation of N(4)-acetylcytidine (ac(4)C) at the wobble position of elongator tRNA(Met), using acetate and ATP as substrates. First activates an acetate ion to form acetyladenylate (Ac-AMP) and then transfers the acetyl group to tRNA to form ac(4)C34. The sequence is that of tRNA(Met) cytidine acetate ligase from Acetivibrio thermocellus (strain ATCC 27405 / DSM 1237 / JCM 9322 / NBRC 103400 / NCIMB 10682 / NRRL B-4536 / VPI 7372) (Clostridium thermocellum).